The chain runs to 250 residues: 5-oxoprolinase subunit A (250 aa).

The protein belongs to the LamB/PxpA family. As to quaternary structure, forms a complex composed of PxpA, PxpB and PxpC.

It carries out the reaction 5-oxo-L-proline + ATP + 2 H2O = L-glutamate + ADP + phosphate + H(+). Its function is as follows. Catalyzes the cleavage of 5-oxoproline to form L-glutamate coupled to the hydrolysis of ATP to ADP and inorganic phosphate. This Chromohalobacter salexigens (strain ATCC BAA-138 / DSM 3043 / CIP 106854 / NCIMB 13768 / 1H11) protein is 5-oxoprolinase subunit A.